A 536-amino-acid chain; its full sequence is Putative beta-xylosidase (536 aa).

The active-site Proton acceptor is the D14. E186 serves as the catalytic Proton donor.

It belongs to the glycosyl hydrolase 43 family.

The enzyme catalyses Hydrolysis of (1-&gt;4)-beta-D-xylans, to remove successive D-xylose residues from the non-reducing termini.. The polypeptide is Putative beta-xylosidase (yagH) (Escherichia coli (strain K12)).